Consider the following 247-residue polypeptide: NCT transcriptional regulatory complex subunit A (247 aa).

Residues 1-12 (MTDQDSTYRPRS) are compositionally biased toward basic and acidic residues. 3 disordered regions span residues 1-31 (MTDQ…SPIY), 48-82 (FFAP…SPDM), and 212-247 (VPDQ…DDSD). The span at 13 to 22 (PDLSTFQSSI) shows a compositional bias: polar residues.

Belongs to the NC2 alpha/DRAP1 family. In terms of assembly, forms the NCT transcriptional regulatory complex with nctB and mot1.

It is found in the nucleus. Functionally, part of the NCT transcriptional regulatory complex that acts as a key regulator of ergosterol biosynthesis and the azole exporter cdr1B. The NCT complex binds the promoters of genes linked to azole susceptibility, and especially represses the expression of cdr1B transporter. This is NCT transcriptional regulatory complex subunit A from Aspergillus fumigatus (strain CBS 144.89 / FGSC A1163 / CEA10) (Neosartorya fumigata).